The following is a 211-amino-acid chain: Acyl-homoserine-lactone synthase (211 aa).

Belongs to the autoinducer synthase family.

The enzyme catalyses a fatty acyl-[ACP] + S-adenosyl-L-methionine = an N-acyl-L-homoserine lactone + S-methyl-5'-thioadenosine + holo-[ACP] + H(+). Required for the synthesis of OHHL (N-(3-oxohexanoyl)-L-homoserine lactone), an autoinducer molecule which binds to TraR and thus acts in the control of conjugal transfer. The polypeptide is Acyl-homoserine-lactone synthase (traI) (Agrobacterium fabrum (strain C58 / ATCC 33970) (Agrobacterium tumefaciens (strain C58))).